A 30-amino-acid chain; its full sequence is Cycloviolacin-O9 (30 aa).

Positions 1-30 (GIPCGESCVWIPCLTSAVGCSCKSKVCYRN) form a cross-link, cyclopeptide (Gly-Asn). 3 cysteine pairs are disulfide-bonded: Cys4/Cys20, Cys8/Cys22, and Cys13/Cys27.

Post-translationally, this is a cyclic peptide.

Probably participates in a plant defense mechanism. This chain is Cycloviolacin-O9, found in Viola odorata (Sweet violet).